We begin with the raw amino-acid sequence, 345 residues long: MVGKGLPVLKNALKQLEGLSKAASVGTAEVIQKAYHQLTKLQAARLVFAYVTLVLLYVIMMLILTSSVIDLVGFSTPHRLPPFVDQAQLKHFNTAQDTLMIVFVALGVNFLLVILVFLIYLLIKLKHIEAPLSGSMSYFAHPVLKYIFGIMSFIFVFIITVFSILRITCADANTLVQDLELLSNTSFADTNFTNAAHAAVSGLLTNCTAPHTDIAKCGYSGVHLLMSLESRTRRLWTGSTSGGLTEAGIPRMLTAVGSCWMTKEVVPVILLVMFILYMFLHLWMVIRALRRRRLGTIIEDEHLPLTSYEDGELDEEGGADNLLYAIPPGSTIPGMRKWNYTPARA.

Helical transmembrane passes span 46-63, 101-118, 147-165, and 265-286; these read LVFA…MMLI, IVFV…LVFL, IFGI…FSIL, and VVPV…WMVI.

The protein localises to the membrane. The sequence is that of Putative membrane protein ORF59 (ORF59) from Ictalurid herpesvirus 1 (strain Auburn) (IcHV-1).